An 80-amino-acid chain; its full sequence is Large ribosomal subunit protein eL38 (80 aa).

This sequence belongs to the eukaryotic ribosomal protein eL38 family. In terms of assembly, component of the large ribosomal subunit (LSU). Mature N.crassa ribosomes consist of a small (40S) and a large (60S) subunit. The 40S small subunit contains 1 molecule of ribosomal RNA (18S rRNA) and at least 32 different proteins. The large 60S subunit contains 3 rRNA molecules (26S, 5.8S and 5S rRNA) and at least 42 different proteins.

The protein resides in the cytoplasm. Component of the ribosome, a large ribonucleoprotein complex responsible for the synthesis of proteins in the cell. The small ribosomal subunit (SSU) binds messenger RNAs (mRNAs) and translates the encoded message by selecting cognate aminoacyl-transfer RNA (tRNA) molecules. The large subunit (LSU) contains the ribosomal catalytic site termed the peptidyl transferase center (PTC), which catalyzes the formation of peptide bonds, thereby polymerizing the amino acids delivered by tRNAs into a polypeptide chain. The nascent polypeptides leave the ribosome through a tunnel in the LSU and interact with protein factors that function in enzymatic processing, targeting, and the membrane insertion of nascent chains at the exit of the ribosomal tunnel. The protein is Large ribosomal subunit protein eL38 (rpl-38) of Neurospora crassa (strain ATCC 24698 / 74-OR23-1A / CBS 708.71 / DSM 1257 / FGSC 987).